Reading from the N-terminus, the 1175-residue chain is Beta-agarase AgaO (1175 aa).

The first 29 residues, Met-1–Ala-29, serve as a signal peptide directing secretion. The 133-residue stretch at Tyr-32–Ala-164 folds into the CBM6 1 domain. The interval Ser-169–Ser-208 is disordered. The span at Thr-178 to Ser-200 shows a compositional bias: low complexity. One can recognise a CBM6 2 domain in the interval Phe-211–Glu-339. A disordered region spans residues Ile-355 to Ala-481. Residues Asp-382–Asp-393 are compositionally biased toward basic and acidic residues. Polar residues predominate over residues Asn-471–Ala-481. The active-site Proton donor is Glu-661. The active-site Nucleophile is Glu-832.

Belongs to the glycosyl hydrolase 86 family.

The catalysed reaction is Hydrolysis of (1-&gt;4)-beta-D-galactosidic linkages in agarose, giving the tetramer as the predominant product.. Activity and stability are strongly enhanced by CaCl(2). Activity is not affected by sulfhydryl inhibitors such as iodoacetoamide and p-chloromercuribenzoate or by thiol reagents such as dithiothreitol and 2-mercaptoethanol. Strongly inhibited by N-bromosuccinimide and sodium dodecyl sulfate. Endo-type beta-agarase, which degrades agarose and agarose oligosaccharides more polymerized than hexamers to yield neoagarohexaose (NA6) as the main product, with lesser amounts of neoagarotetraose (NA4) and neoagarobiose (NA2). The polypeptide is Beta-agarase AgaO (Microbulbifer thermotolerans).